We begin with the raw amino-acid sequence, 632 residues long: tRNA uridine 5-carboxymethylaminomethyl modification enzyme MnmG (632 aa).

13–18 lines the FAD pocket; that stretch reads GGGHAG. Residue 273 to 287 coordinates NAD(+); that stretch reads GPRYCPSIEDKIHRF.

The protein belongs to the MnmG family. Homodimer. Heterotetramer of two MnmE and two MnmG subunits. Requires FAD as cofactor.

It is found in the cytoplasm. Functionally, NAD-binding protein involved in the addition of a carboxymethylaminomethyl (cmnm) group at the wobble position (U34) of certain tRNAs, forming tRNA-cmnm(5)s(2)U34. This Psychrobacter arcticus (strain DSM 17307 / VKM B-2377 / 273-4) protein is tRNA uridine 5-carboxymethylaminomethyl modification enzyme MnmG.